The primary structure comprises 255 residues: Small ribosomal subunit protein uS2 (255 aa).

Residues 231-255 (RLQTGAEEEFSTEGEEVVEETPAEA) form a disordered region. Positions 236–255 (AEEEFSTEGEEVVEETPAEA) are enriched in acidic residues.

Belongs to the universal ribosomal protein uS2 family.

This is Small ribosomal subunit protein uS2 from Geobacter sp. (strain M21).